The following is a 279-amino-acid chain: MTRWRLDIAYDGANFSGWATQPDRRTVQGELETWIPRVLRLDQPTPLTVAGRTDAGVHARGQVAHVDLPDNVDTSAMLRRLSRVLTPDVVVKSVRPVPSTFDARFSALWRRYVYRLWDESSRPDPVTRFHVAPVRGHLDLDRLNTAGTSLLGLRDFAAFCKHREGATTIRTLLDCHAKRLDDPCGTVEVTVRADAFCHSMVRSLVGALTAVASGRRSQDWLDNVAASTSRASSVLVMPACGLTLEEVGYPSDEDLAQRAAQARSRRSHNDICDTCWEDR.

Aspartate 54 functions as the Nucleophile in the catalytic mechanism. Residue tyrosine 112 participates in substrate binding.

Belongs to the tRNA pseudouridine synthase TruA family. Homodimer.

It catalyses the reaction uridine(38/39/40) in tRNA = pseudouridine(38/39/40) in tRNA. Its function is as follows. Formation of pseudouridine at positions 38, 39 and 40 in the anticodon stem and loop of transfer RNAs. This is tRNA pseudouridine synthase A from Cutibacterium acnes (strain DSM 16379 / KPA171202) (Propionibacterium acnes).